We begin with the raw amino-acid sequence, 334 residues long: MATIKDVAKMAGVSTTTVSHVINKTRFVAAETEKLVLQAIQELNYSPSAVARSLKVNTTKSIGMIVTSSEAPYFAEIIHAVEEHCYRQGYSLFLCNTQNNVEKIKNHLEMLIKKRVDGILVMCAEYTQDSLDLLANFTSLPLVVMDWGPDNKHTDIIQDHSFEGGYLATKYLIDHGHKDIGIIAGELTKTTAKTRYEGFIKAMNEAGLKINPDWVMEGFFEPEDGYECMNKILAQDTLPTAVFCCNDVMALGAISAIGEKGLRVPEDISIIGYDNIHASRFYSPPLTTIHQSKSRLGARAVTLLFERINEKSEERAVIEMHPELVIRKSVKSRL.

The HTH lacI-type domain occupies A2 to V56. Residues I4–N23 constitute a DNA-binding region (H-T-H motif). A DNA-binding region spans residues S48 to V56. Hypoxanthine is bound by residues Y73, K189, T191, F220, and D274.

Homodimer.

It participates in purine metabolism; purine nucleotide biosynthesis [regulation]. Functionally, is the main repressor of the genes involved in the de novo synthesis of purine nucleotides, regulating purB, purC, purEK, purF, purHD, purL, purMN and guaBA expression. PurR is allosterically activated to bind its cognate DNA by binding the purine corepressors, hypoxanthine or guanine, thereby effecting transcription repression. The polypeptide is HTH-type transcriptional repressor PurR (Pasteurella multocida (strain Pm70)).